The following is a 147-amino-acid chain: MSTYTPKAGDVTRTWHVIDATDVVLGRLAVQAANLLRGKHKPTFAPHVDGGDFVVIINAEKVAISGNKREGKFLYHHSGHPGGLKSRSVGEVLDKNPDRLVEKAIVGMLPKNKLGRAISSKLKVYAGPNHPHAAQQPVPFEIKQVAQ.

This sequence belongs to the universal ribosomal protein uL13 family. Part of the 50S ribosomal subunit.

This protein is one of the early assembly proteins of the 50S ribosomal subunit, although it is not seen to bind rRNA by itself. It is important during the early stages of 50S assembly. The sequence is that of Large ribosomal subunit protein uL13 from Rhodococcus jostii (strain RHA1).